The sequence spans 365 residues: DNA replication and repair protein RecF (365 aa).

Residue 30–37 (GQNGSGKT) coordinates ATP.

It belongs to the RecF family.

Its subcellular location is the cytoplasm. In terms of biological role, the RecF protein is involved in DNA metabolism; it is required for DNA replication and normal SOS inducibility. RecF binds preferentially to single-stranded, linear DNA. It also seems to bind ATP. This Shewanella woodyi (strain ATCC 51908 / MS32) protein is DNA replication and repair protein RecF.